The chain runs to 532 residues: O-phosphoserine--tRNA(Cys) ligase (532 aa).

Substrate is bound by residues 188-190 (HMT), 233-235 (SAS), 275-276 (YY), and asparagine 327.

It belongs to the class-II aminoacyl-tRNA synthetase family. O-phosphoseryl-tRNA(Cys) synthetase subfamily. As to quaternary structure, homotetramer. Interacts with SepCysS.

It carries out the reaction tRNA(Cys) + O-phospho-L-serine + ATP = O-phospho-L-seryl-tRNA(Cys) + AMP + diphosphate. In terms of biological role, catalyzes the attachment of O-phosphoserine (Sep) to tRNA(Cys). This chain is O-phosphoserine--tRNA(Cys) ligase, found in Methanocella arvoryzae (strain DSM 22066 / NBRC 105507 / MRE50).